The sequence spans 300 residues: Protein p34 (300 aa).

A run of 5 helical transmembrane segments spans residues 14–34 (YLSV…WVVT), 39–59 (ILAS…NLVA), 87–107 (SIFF…SLFI), 119–139 (IIMY…TYVI), and 170–190 (LSDY…LYIF).

Belongs to the cation diffusion facilitator (CDF) transporter (TC 2.A.4) family.

It is found in the cell membrane. The polypeptide is Protein p34 (p34) (Rickettsia prowazekii (strain Madrid E)).